Here is a 97-residue protein sequence, read N- to C-terminus: Sugar transporter SemiSWEET (97 aa).

The 67-residue stretch at 4 to 70 (IERIGKALEP…IYGIYHKNPT (67 aa)) folds into the PQ-loop domain. The next 3 helical transmembrane spans lie at 15 to 35 (MLVM…KLYV), 44 to 65 (LSLT…YGIY), and 71 to 91 (IWVG…GIIA).

In terms of assembly, homodimer.

The protein localises to the cell membrane. The homodimer mediates transmembrane sugar transport down a concentration gradient. Transport is probably effected by rocking-type movements, where a cargo-binding cavity opens first on one and then on the other side of the membrane. In Vibrio sp. (strain N418), this protein is Sugar transporter SemiSWEET.